Consider the following 648-residue polypeptide: Chaperone protein DnaK (648 aa).

Position 200 is a phosphothreonine; by autocatalysis (threonine 200). The disordered stretch occupies residues 612-631 (QAGAAGAAGAAEGAAQGGAQ).

The protein belongs to the heat shock protein 70 family.

Acts as a chaperone. This is Chaperone protein DnaK from Burkholderia multivorans (strain ATCC 17616 / 249).